Reading from the N-terminus, the 628-residue chain is Siderophore iron transporter 1 (628 aa).

14 consecutive transmembrane segments (helical) span residues 68-88, 107-127, 132-152, 164-184, 194-214, 225-245, 285-305, 317-337, 354-374, 394-414, 420-440, 448-468, 488-508, and 559-579; these read IYRV…GLDG, LLST…IFFA, IFGR…GTII, VGGC…EVIA, LLAL…SGNV, GIGM…ICML, IIGM…FTLA, IIVP…LWEI, GIFF…MQGD, ITSL…FILI, KPFI…LVHY, SGII…TYVT, LYLA…GAVW, and KILC…AFML.

This sequence belongs to the major facilitator superfamily.

The protein resides in the endosome membrane. In terms of biological role, involved in the transport of siderophore ferrioxamine B and so has a role in iron homeostasis. In Saccharomyces cerevisiae (strain ATCC 204508 / S288c) (Baker's yeast), this protein is Siderophore iron transporter 1 (SIT1).